The primary structure comprises 213 residues: uncharacterized protein (213 aa).

Residues 2 to 91 (SRHPEVKWAQ…AEAKWWKKLV (90 aa)) form the CS domain. The interval 168-213 (GMGGMGGMDEFEDESDDEEEVSKPQDAEKAAEAGKSQESDAKAETS) is disordered. A compositionally biased stretch (acidic residues) spans 176-187 (DEFEDESDDEEE). Positions 188–213 (VSKPQDAEKAAEAGKSQESDAKAETS) are enriched in basic and acidic residues.

The protein belongs to the p23/wos2 family.

This is an uncharacterized protein from Oryza sativa subsp. japonica (Rice).